The following is a 173-amino-acid chain: Invasion protein B homolog BruAb1_0366 (173 aa).

Positions Met-1 to Ala-23 are cleaved as a signal peptide.

Belongs to the IalB family.

The polypeptide is Invasion protein B homolog BruAb1_0366 (Brucella abortus biovar 1 (strain 9-941)).